Consider the following 433-residue polypeptide: ATP-dependent protease ATPase subunit HslU (433 aa).

Residues valine 18, 60–65 (GVGKTE), aspartate 246, glutamate 311, and arginine 383 each bind ATP.

It belongs to the ClpX chaperone family. HslU subfamily. As to quaternary structure, a double ring-shaped homohexamer of HslV is capped on each side by a ring-shaped HslU homohexamer. The assembly of the HslU/HslV complex is dependent on binding of ATP.

It is found in the cytoplasm. Functionally, ATPase subunit of a proteasome-like degradation complex; this subunit has chaperone activity. The binding of ATP and its subsequent hydrolysis by HslU are essential for unfolding of protein substrates subsequently hydrolyzed by HslV. HslU recognizes the N-terminal part of its protein substrates and unfolds these before they are guided to HslV for hydrolysis. This chain is ATP-dependent protease ATPase subunit HslU, found in Nitrobacter hamburgensis (strain DSM 10229 / NCIMB 13809 / X14).